Consider the following 125-residue polypeptide: Holo-[acyl-carrier-protein] synthase (125 aa).

Mg(2+)-binding residues include aspartate 8 and glutamate 60.

The protein belongs to the P-Pant transferase superfamily. AcpS family. Requires Mg(2+) as cofactor.

It is found in the cytoplasm. It carries out the reaction apo-[ACP] + CoA = holo-[ACP] + adenosine 3',5'-bisphosphate + H(+). Its function is as follows. Transfers the 4'-phosphopantetheine moiety from coenzyme A to a Ser of acyl-carrier-protein. In Wolbachia sp. subsp. Brugia malayi (strain TRS), this protein is Holo-[acyl-carrier-protein] synthase.